The sequence spans 628 residues: 1-deoxy-D-xylulose-5-phosphate synthase (628 aa).

Thiamine diphosphate-binding positions include histidine 80 and 121–123 (GHS). Aspartate 152 lines the Mg(2+) pocket. Residues 153-154 (GG), asparagine 181, tyrosine 289, and glutamate 370 each bind thiamine diphosphate. Asparagine 181 contributes to the Mg(2+) binding site.

The protein belongs to the transketolase family. DXPS subfamily. In terms of assembly, homodimer. Mg(2+) serves as cofactor. Thiamine diphosphate is required as a cofactor.

It catalyses the reaction D-glyceraldehyde 3-phosphate + pyruvate + H(+) = 1-deoxy-D-xylulose 5-phosphate + CO2. It participates in metabolic intermediate biosynthesis; 1-deoxy-D-xylulose 5-phosphate biosynthesis; 1-deoxy-D-xylulose 5-phosphate from D-glyceraldehyde 3-phosphate and pyruvate: step 1/1. In terms of biological role, catalyzes the acyloin condensation reaction between C atoms 2 and 3 of pyruvate and glyceraldehyde 3-phosphate to yield 1-deoxy-D-xylulose-5-phosphate (DXP). This chain is 1-deoxy-D-xylulose-5-phosphate synthase, found in Alkalilimnicola ehrlichii (strain ATCC BAA-1101 / DSM 17681 / MLHE-1).